An 81-amino-acid polypeptide reads, in one-letter code: Photosystem I iron-sulfur center (81 aa).

4Fe-4S ferredoxin-type domains lie at 2–31 (SHSV…MIPW) and 39–68 (IAPA…VRVY). Positions 11, 14, 17, 21, 48, 51, 54, and 58 each coordinate [4Fe-4S] cluster.

The eukaryotic PSI reaction center is composed of at least 11 subunits. [4Fe-4S] cluster is required as a cofactor.

The protein localises to the plastid. It localises to the chloroplast thylakoid membrane. The enzyme catalyses reduced [plastocyanin] + hnu + oxidized [2Fe-2S]-[ferredoxin] = oxidized [plastocyanin] + reduced [2Fe-2S]-[ferredoxin]. Functionally, apoprotein for the two 4Fe-4S centers FA and FB of photosystem I (PSI); essential for photochemical activity. FB is the terminal electron acceptor of PSI, donating electrons to ferredoxin. The C-terminus interacts with PsaA/B/D and helps assemble the protein into the PSI complex. Required for binding of PsaD and PsaE to PSI. PSI is a plastocyanin-ferredoxin oxidoreductase, converting photonic excitation into a charge separation, which transfers an electron from the donor P700 chlorophyll pair to the spectroscopically characterized acceptors A0, A1, FX, FA and FB in turn. This is Photosystem I iron-sulfur center from Chloranthus spicatus (Chulantree).